The sequence spans 232 residues: Ornithine carbamoyltransferase (232 aa).

Carbamoyl phosphate is bound by residues Gln15, Arg39, and 66 to 69 (HPTQ). Residues Asn99, Asp163, and 167 to 168 (SM) each bind L-ornithine. Residues 204 to 207 (HCLP) and Thr232 contribute to the carbamoyl phosphate site.

It belongs to the aspartate/ornithine carbamoyltransferase superfamily. OTCase family.

The protein resides in the cytoplasm. It carries out the reaction carbamoyl phosphate + L-ornithine = L-citrulline + phosphate + H(+). The protein operates within amino-acid biosynthesis; L-arginine biosynthesis; L-arginine from L-ornithine and carbamoyl phosphate: step 1/3. The sequence is that of Ornithine carbamoyltransferase (argF) from Neisseria animalis.